The sequence spans 288 residues: Phenazine biosynthesis-like domain-containing protein 1 (288 aa).

The active site involves Glu46.

This sequence belongs to the PhzF family.

In Mus musculus (Mouse), this protein is Phenazine biosynthesis-like domain-containing protein 1 (Pbld1).